A 969-amino-acid chain; its full sequence is Dual serine/threonine and tyrosine protein kinase (969 aa).

The stretch at Q7–N37 forms a coiled coil. The region spanning P632–L894 is the Protein kinase domain. Residues I638 to V646 and K662 each bind ATP. D760 (proton acceptor) is an active-site residue. The interval S904 to T945 is disordered.

It belongs to the protein kinase superfamily. Ser/Thr protein kinase family.

The protein resides in the cytoplasm. The enzyme catalyses L-seryl-[protein] + ATP = O-phospho-L-seryl-[protein] + ADP + H(+). It carries out the reaction L-threonyl-[protein] + ATP = O-phospho-L-threonyl-[protein] + ADP + H(+). It catalyses the reaction L-tyrosyl-[protein] + ATP = O-phospho-L-tyrosyl-[protein] + ADP + H(+). The polypeptide is Dual serine/threonine and tyrosine protein kinase (Apis mellifera (Honeybee)).